Here is a 95-residue protein sequence, read N- to C-terminus: Small ribosomal subunit protein bS21 (95 aa).

Positions 56 to 95 are disordered; it reads KLARKKMQREGLLPMKPKPVFGAGPGAGRGGPAAGPRGPR. The segment covering 78-88 has biased composition (gly residues); sequence AGPGAGRGGPA.

It belongs to the bacterial ribosomal protein bS21 family.

This chain is Small ribosomal subunit protein bS21, found in Nitrobacter winogradskyi (strain ATCC 25391 / DSM 10237 / CIP 104748 / NCIMB 11846 / Nb-255).